Reading from the N-terminus, the 95-residue chain is Mitochondrial import inner membrane translocase subunit Tim13 (95 aa).

Position 1 is an N-acetylmethionine (M1). Position 7 is a phosphoserine (S7). A Twin CX3C motif motif is present at residues 46–69; sequence CFRKCIGKPGGSLDNSEQKCIAMC. 2 disulfides stabilise this stretch: C46/C69 and C50/C65. N6-succinyllysine is present on K53.

This sequence belongs to the small Tim family. In terms of assembly, heterohexamer; composed of 3 copies of TIMM8 (TIMM8A or TIMM8B) and 3 copies of TIMM13, named soluble 70 kDa complex. Associates with the TIM22 complex, whose core is composed of TIMM22. In terms of tissue distribution, ubiquitous, with highest expression in heart, kidney, liver and skeletal muscle.

It localises to the mitochondrion inner membrane. Its function is as follows. Mitochondrial intermembrane chaperone that participates in the import and insertion of some multi-pass transmembrane proteins into the mitochondrial inner membrane. Also required for the transfer of beta-barrel precursors from the TOM complex to the sorting and assembly machinery (SAM complex) of the outer membrane. Acts as a chaperone-like protein that protects the hydrophobic precursors from aggregation and guide them through the mitochondrial intermembrane space. The TIMM8-TIMM13 complex mediates the import of proteins such as TIMM23, SLC25A12/ARALAR1 and SLC25A13/ARALAR2, while the predominant TIMM9-TIMM10 70 kDa complex mediates the import of much more proteins. The chain is Mitochondrial import inner membrane translocase subunit Tim13 (TIMM13) from Homo sapiens (Human).